The sequence spans 320 residues: Ferrochelatase (320 aa).

2 residues coordinate Fe cation: H194 and E275.

It belongs to the ferrochelatase family.

It localises to the cytoplasm. The enzyme catalyses heme b + 2 H(+) = protoporphyrin IX + Fe(2+). Its pathway is porphyrin-containing compound metabolism; protoheme biosynthesis; protoheme from protoporphyrin-IX: step 1/1. Catalyzes the ferrous insertion into protoporphyrin IX. This Vibrio atlanticus (strain LGP32) (Vibrio splendidus (strain Mel32)) protein is Ferrochelatase.